The primary structure comprises 367 residues: Centromere protein L (367 aa).

This sequence belongs to the CENP-L/IML3 family.

It is found in the nucleus. Its subcellular location is the chromosome. The protein localises to the centromere. Its function is as follows. Probable component of a centromeric complex involved in assembly of kinetochore proteins, mitotic progression and chromosome segregation. In Danio rerio (Zebrafish), this protein is Centromere protein L (cenpl).